A 420-amino-acid chain; its full sequence is ATP phosphoribosyltransferase regulatory subunit (420 aa).

It belongs to the class-II aminoacyl-tRNA synthetase family. HisZ subfamily. Heteromultimer composed of HisG and HisZ subunits.

The protein resides in the cytoplasm. The protein operates within amino-acid biosynthesis; L-histidine biosynthesis; L-histidine from 5-phospho-alpha-D-ribose 1-diphosphate: step 1/9. Required for the first step of histidine biosynthesis. May allow the feedback regulation of ATP phosphoribosyltransferase activity by histidine. This chain is ATP phosphoribosyltransferase regulatory subunit, found in Synechococcus sp. (strain ATCC 27144 / PCC 6301 / SAUG 1402/1) (Anacystis nidulans).